We begin with the raw amino-acid sequence, 166 residues long: Cofilin-1 (166 aa).

An N-acetylalanine modification is found at Ala2. Phosphoserine occurs at positions 3 and 8. The ADF-H domain maps to Gly4–Leu153. Lys13 carries the N6-acetyllysine modification. The residue at position 25 (Thr25) is a Phosphothreonine. A Nuclear localization signal motif is present at residues Lys30–Lys34. Ser41 bears the Phosphoserine mark. Thr63 carries the phosphothreonine modification. Tyr68 carries the post-translational modification Phosphotyrosine. Position 73 is an N6-acetyllysine (Lys73). Tyr82 is subject to Phosphotyrosine. Lys132 is covalently cross-linked (Glycyl lysine isopeptide (Lys-Gly) (interchain with G-Cter in SUMO2)). The residue at position 140 (Tyr140) is a Phosphotyrosine. N6-acetyllysine is present on Lys144. At Ser156 the chain carries Phosphoserine.

The protein belongs to the actin-binding proteins ADF family. As to quaternary structure, can bind G- and F-actin in a 1:1 ratio of cofilin to actin. It is a major component of intranuclear and cytoplasmic actin rods. Interacts with the subcortical maternal complex (SCMC) via interaction with TLE6 and NLRP5. Interacts with C9orf72. In terms of processing, inactivated by phosphorylation on Ser-3. Phosphorylated on Ser-3 in resting cells. Dephosphorylated by PDXP/chronophin; this restores its activity in promoting actin filament depolymerization. The phosphorylation of Ser-24 may prevent recognition of the nuclear localization signal. Phosphorylated via a ARRB1-RAC1-LIMK1-PAK1 cascade upon active ligand stimulation of atypical chemokine receptor ACKR2. Widely distributed in various tissues. Not found in skeletal muscle.

It is found in the nucleus matrix. The protein resides in the cytoplasm. Its subcellular location is the cytoskeleton. It localises to the cell projection. The protein localises to the ruffle membrane. It is found in the lamellipodium membrane. The protein resides in the lamellipodium. Its subcellular location is the growth cone. It localises to the axon. Its function is as follows. Binds to F-actin and exhibits pH-sensitive F-actin depolymerizing activity. In conjunction with the subcortical maternal complex (SCMC), plays an essential role for zygotes to progress beyond the first embryonic cell divisions via regulation of actin dynamics. Required for the centralization of the mitotic spindle and symmetric division of zygotes. Plays a role in the regulation of cell morphology and cytoskeletal organization in epithelial cells. Required for the up-regulation of atypical chemokine receptor ACKR2 from endosomal compartment to cell membrane, increasing its efficiency in chemokine uptake and degradation. Required for neural tube morphogenesis and neural crest cell migration. This is Cofilin-1 (Cfl1) from Mus musculus (Mouse).